A 1338-amino-acid polypeptide reads, in one-letter code: P-type sodium-transporting ATPase4 (1338 aa).

The tract at residues 1 to 106 (MAARASADKL…KSISSVSQMH (106 aa)) is disordered. Positions 55 to 69 (AEEKVAGHDGESPRR) are enriched in basic and acidic residues. Polar residues predominate over residues 91–104 (GHSQLGKSISSVSQ). Helical transmembrane passes span 229–249 (IFIQ…AIAS), 255–275 (WVEG…ATYM), 418–438 (LGGM…VVAI), 456–476 (IVLV…PMVV), 985–1005 (FVCF…IAIA), 1068–1088 (IFEA…CTGV), 1261–1281 (MHLA…VPGI), and 1288–1308 (CALP…NLIL).

The protein belongs to the cation transport ATPase (P-type) (TC 3.A.3) family.

The protein localises to the cell membrane. The enzyme catalyses Na(+)(in) + ATP + H2O = Na(+)(out) + ADP + phosphate + H(+). With respect to regulation, inhibited by cipargamin, a synthetic spiroindolone. Inhibited by pyrazoleamide PA21A050, structurally unrelated to the spiroindolones. Inhibited by (+)-SJ733, a dihydroisoquinolone compound. Its function is as follows. Sodium-exporting ATPase. Required for the extrusion of Na(+) from the parasites to maintain a low cytosolic concentration of Na(+). Required for maintaining the viability of extracellular parasites but not for intracellular growth, egress or invasion. Involved in parasite virulence. The protein is P-type sodium-transporting ATPase4 of Toxoplasma gondii (strain ATCC 50861 / VEG).